Consider the following 397-residue polypeptide: Golgi-associated RAB2 interactor protein 2 (397 aa).

Disordered stretches follow at residues 1 to 24 (MKKSNRKSPTRIDEKDDICVPDSK) and 342 to 397 (QTTL…KLLN). 3 stretches are compositionally biased toward basic and acidic residues: residues 10–24 (TRIDEKDDICVPDSK), 353–369 (EKSKEMSDRPREIRTMD), and 376–397 (KAEEPRSRRTDSDTSDKCKLLN).

It belongs to the GARIN family. Interacts with CALM1.

It is found in the cell projection. The protein resides in the cilium. The protein localises to the flagellum. In terms of biological role, seems to play a role in sperm motility. The sequence is that of Golgi-associated RAB2 interactor protein 2 (GARIN2) from Bos taurus (Bovine).